A 287-amino-acid polypeptide reads, in one-letter code: Phospholipase A and acyltransferase 5 (287 aa).

2 disordered regions span residues 48–72 (PKQISRTASTESSDTQPTNDSASSQ) and 86–138 (DRGL…SNQK). Composition is skewed to polar residues over residues 49 to 72 (KQISRTASTESSDTQPTNDSASSQ) and 128 to 138 (LKNQAAESNQK). In terms of domain architecture, LRAT spans 144 to 257 (LIEIFRIGYE…LRYGVPRSQQ (114 aa)). Active-site residues include H154 and H166. C241 serves as the catalytic Acyl-thioester intermediate.

This sequence belongs to the H-rev107 family. In terms of tissue distribution, expressed in testis.

Its subcellular location is the cytoplasm. The protein resides in the cytosol. It carries out the reaction a 1,2-diacyl-sn-glycero-3-phosphocholine + H2O = a 1-acyl-sn-glycero-3-phosphocholine + a fatty acid + H(+). It catalyses the reaction a 1,2-diacyl-sn-glycero-3-phosphocholine + H2O = a 2-acyl-sn-glycero-3-phosphocholine + a fatty acid + H(+). The catalysed reaction is 1-hexadecanoyl-2-(5Z,8Z,11Z,14Z-eicosatetraenoyl)-sn-glycero-3-phosphocholine + 1,2-di-(9Z-octadecenoyl)-sn-glycero-3-phosphoethanolamine = N-(5Z,8Z,11Z,14Z-eicosatetraenoyl)-1,2-di-(9Z-octadecenoyl)-sn-glycero-3-phosphoethanolamine + 1-hexadecanoyl-sn-glycero-3-phosphocholine + H(+). The enzyme catalyses 1,2-di-(9Z-octadecenoyl)-sn-glycero-3-phosphoethanolamine + 1,2-dihexadecanoyl-sn-glycero-3-phosphocholine = N-hexadecanoyl-1,2-di-(9Z-octadecenoyl)-sn-glycero-3-phosphoethanolamine + 1-hexadecanoyl-sn-glycero-3-phosphocholine + H(+). It carries out the reaction 1,2-di-(9Z-octadecenoyl)-sn-glycero-3-phosphoethanolamine + 1,2-dihexadecanoyl-sn-glycero-3-phosphocholine = N-hexadecanoyl-1,2-di-(9Z-octadecenoyl)-sn-glycero-3-phosphoethanolamine + 2-hexadecanoyl-sn-glycero-3-phosphocholine + H(+). It catalyses the reaction a 1,2-diacyl-sn-glycero-3-phosphoethanolamine + a 1,2-diacyl-sn-glycero-3-phosphocholine = an N-acyl-1,2-diacyl-sn-glycero-3-phosphoethanolamine + a 1-acyl-sn-glycero-3-phosphocholine + H(+). The catalysed reaction is a 1,2-diacyl-sn-glycero-3-phosphoethanolamine + a 1,2-diacyl-sn-glycero-3-phosphocholine = an N-acyl-1,2-diacyl-sn-glycero-3-phosphoethanolamine + a 2-acyl-sn-glycero-3-phosphocholine + H(+). The enzyme catalyses 1-hexadecanoyl-2-(9Z-octadecenoyl)-sn-glycero-3-phosphocholine + 1,2-di-(9Z-octadecenoyl)-sn-glycero-3-phosphoethanolamine = N,1,2-tri-(9Z-octadecenoyl)-sn-glycero-3-phosphoethanolamine + 1-hexadecanoyl-sn-glycero-3-phosphocholine + H(+). Exhibits both phospholipase A1/2 and acyltransferase activities. Shows phospholipase A1 (PLA1) and A2 (PLA2) activity, catalyzing the calcium-independent release of fatty acids from the sn-1 or sn-2 position of glycerophospholipids. Shows N-acyltransferase activity, catalyzing the calcium-independent transfer of a fatty acyl group at the sn-1 position of phosphatidylcholine (PC) and other glycerophospholipids to the primary amine of phosphatidylethanolamine (PE), forming N-acylphosphatidylethanolamine (NAPE), which serves as precursor for N-acylethanolamines (NAEs). This Rattus norvegicus (Rat) protein is Phospholipase A and acyltransferase 5.